Here is a 505-residue protein sequence, read N- to C-terminus: Maturase K (505 aa).

This sequence belongs to the intron maturase 2 family. MatK subfamily.

The protein localises to the plastid. It localises to the chloroplast. Usually encoded in the trnK tRNA gene intron. Probably assists in splicing its own and other chloroplast group II introns. This Ulmus parvifolia (Chinese elm) protein is Maturase K.